Here is a 177-residue protein sequence, read N- to C-terminus: CASP-like protein 5A2 (177 aa).

Residues 1 to 36 lie on the Cytoplasmic side of the membrane; it reads MNASHPAVHPVGVPPAVAGQLPPRMRMKEIQGMPGT. Residues 37-57 form a helical membrane-spanning segment; that stretch reads IGGLLLRLGQFCFALVAFSIM. Residues 58–68 lie on the Extracellular side of the membrane; it reads VSIENFSTVTA. N-linked (GlcNAc...) asparagine glycosylation is present at Asn-62. The chain crosses the membrane as a helical span at residues 69–89; sequence FCYLVAATVLQCLWSLALAII. Residues 90-103 are Cytoplasmic-facing; it reads DGYALLVKRSLRNS. Residues 104–124 form a helical membrane-spanning segment; that stretch reads LLVSLLVVGDGVTATLTFAAA. Topologically, residues 125–153 are extracellular; the sequence is CASAGITVLIGNDLRQCKENHCARYETAT. Residues 154 to 174 traverse the membrane as a helical segment; the sequence is ALAFLSWFMVSLSFILTFWLL. The Cytoplasmic portion of the chain corresponds to 175–177; sequence ATR.

The protein belongs to the Casparian strip membrane proteins (CASP) family. In terms of assembly, homodimer and heterodimers.

Its subcellular location is the cell membrane. The protein is CASP-like protein 5A2 of Ginkgo biloba (Ginkgo).